The primary structure comprises 314 residues: Glycine--tRNA ligase alpha subunit (314 aa).

This sequence belongs to the class-II aminoacyl-tRNA synthetase family. As to quaternary structure, tetramer of two alpha and two beta subunits.

It localises to the cytoplasm. The enzyme catalyses tRNA(Gly) + glycine + ATP = glycyl-tRNA(Gly) + AMP + diphosphate. This is Glycine--tRNA ligase alpha subunit from Mesorhizobium japonicum (strain LMG 29417 / CECT 9101 / MAFF 303099) (Mesorhizobium loti (strain MAFF 303099)).